The primary structure comprises 178 residues: PRA1 family protein 2 (178 aa).

At 1–41 the chain is on the cytoplasmic side; it reads MSEVRLPPLRALDDFVLGSARLVAPDPCDPQRWCHRVINNL. The helical transmembrane segment at 42–62 threads the bilayer; that stretch reads LYYQTNYLICFGLGLALAGYV. The Extracellular portion of the chain corresponds to 63-64; the sequence is RP. A helical membrane pass occupies residues 65–85; the sequence is LHTLLSALVVAVALGMLVCAA. The Cytoplasmic segment spans residues 86-96; the sequence is ENRAAVRRCRR. A helical membrane pass occupies residues 97–119; the sequence is SHPAACLAAVLAVGFLVLWAAGG. Topologically, residues 120–122 are extracellular; it reads AGT. Residues 123–140 form a helical membrane-spanning segment; it reads FLLSIAGPVLLILVHASL. The Cytoplasmic portion of the chain corresponds to 141–178; the sequence is RLRNLKNKIENKIESIGLKRTPMGLLLEALGQEQEAGS.

The protein belongs to the PRA1 family. In terms of assembly, interacts with CCR5 and GDE1.

The protein localises to the endosome membrane. In terms of biological role, may be involved in ER/Golgi transport and vesicular traffic. Plays a proapoptotic role in cerulenin-induced neuroblastoma apoptosis. The protein is PRA1 family protein 2 (PRAF2) of Bos taurus (Bovine).